We begin with the raw amino-acid sequence, 546 residues long: Phosphatidylinositol 4-phosphate 5-kinase type-1 alpha (546 aa).

A PIPK domain is found at 66–434 (TSSALKGAIQ…RFQRFMCNTV (369 aa)). K88 is covalently cross-linked (Glycyl lysine isopeptide (Lys-Gly) (interchain with G-Cter in ubiquitin)). 2 disordered regions span residues 442–475 (PSPT…SGEH) and 491–518 (LGRP…PSFS). Low complexity-rich tracts occupy residues 450–462 (SGPS…GPSG) and 509–518 (GSPVPGPSFS).

As to quaternary structure, interacts with RAC1. Interacts with TUT1. Forms a complex with CDH1/E-cadherin, CTNNB1/beta-catenin and CTNND1 at the plasma membrane upon calcium stimulation. Found in a ternary complex with IRS1 and DGKZ in the absence of insulin stimulation. Interacts with DGKZ. Interacts with PIP4K2C; the interaction inhibits PIP5K1A kinase activity. Highest expression in brain. Also detected in skeletal muscle, testis, brain and lung.

It is found in the cell membrane. The protein localises to the cytoplasm. The protein resides in the nucleus. Its subcellular location is the nucleus speckle. It localises to the cell projection. It is found in the ruffle. The protein localises to the lamellipodium. It carries out the reaction a 1,2-diacyl-sn-glycero-3-phospho-(1D-myo-inositol 4-phosphate) + ATP = a 1,2-diacyl-sn-glycero-3-phospho-(1D-myo-inositol-4,5-bisphosphate) + ADP + H(+). It catalyses the reaction 1-octadecanoyl-2-(5Z,8Z,11Z,14Z)-eicosatetraenoyl-sn-glycero-3-phospho-1D-myo-inositol 4-phosphate + ATP = 1-octadecanoyl-2-(5Z,8Z,11Z,14Z)-eicosatetraenoyl-sn-glycero-3-phospho-1D-myo-inositol 4,5-bisphosphate + ADP + H(+). The catalysed reaction is 1,2-dihexadecanoyl-sn-glycero-3-phospho-(1D-myo-inositol-4-phosphate) + ATP = 1,2-dihexadecanoyl-sn-glycero-3-phospho-(1D-myo-inositol-4,5-bisphosphate) + ADP + H(+). The enzyme catalyses 1-octadecanoyl-2-(9Z)-octadecenoyl-sn-glycero-3-phospho-1D-myo-inositol 4-phosphate + ATP = 1-octadecanoyl-2-(9Z)-octadecenoyl-sn-glycero-3-phospho-1D-myo-inositol 4,5-bisphosphate + ADP + H(+). It carries out the reaction 1-octadecanoyl-2-(9Z)-octadecenoyl-sn-glycero-3-phospho-1D-myo-inositol + ATP = 1-octadecanoyl-2-(9Z)-octadecenoyl-sn-glycero-3-phospho-1D-myo-inositol 5-phosphate + ADP + H(+). It catalyses the reaction 1-octadecanoyl-2-(9Z,12Z)-octadecadienoyl-sn-glycero-3-phospho-1D-myo-inositol + ATP = 1-octadecanoyl-2-(9Z,12Z)-octadecadienoyl-sn-glycero-3-phospho-1D-myo-inositol 5-phosphate + ADP + H(+). The catalysed reaction is 1-octadecanoyl-2-(5Z,8Z,11Z,14Z-eicosatetraenoyl)-sn-glycero-3-phospho-(1D-myo-inositol) + ATP = 1-octadecanoyl-2-(5Z,8Z,11Z,14Z)-eicosatetraenoyl-sn-glycero-3-phospho-1D-myo-inositol 5-phosphate + ADP + H(+). The enzyme catalyses 1,2-di-(9Z,12Z)-octadecadienoyl-sn-glycero-3-phospho-1D-myo-inositol + ATP = 1,2-di(9Z,12Z)-octadecadienoyl-sn-glycero-3-phospho-1D-myo-inositol 5-phosphate + ADP + H(+). With respect to regulation, activated by phosphatidic acid. Catalyzes the phosphorylation of phosphatidylinositol 4-phosphate (PtdIns(4)P/PI4P) to form phosphatidylinositol 4,5-bisphosphate (PtdIns(4,5)P2/PIP2), a lipid second messenger that regulates several cellular processes such as signal transduction, vesicle trafficking, actin cytoskeleton dynamics, cell adhesion, and cell motility. PtdIns(4,5)P2 can directly act as a second messenger or can be utilized as a precursor to generate other second messengers: inositol 1,4,5-trisphosphate (IP3), diacylglycerol (DAG) or phosphatidylinositol-3,4,5-trisphosphate (PtdIns(3,4,5)P3/PIP3). PIP5K1A-mediated phosphorylation of PtdIns(4)P is the predominant pathway for PtdIns(4,5)P2 synthesis. Can also use phosphatidylinositol (PtdIns) as substrate in vitro. Together with PIP5K1C, is required for phagocytosis, both enzymes regulating different types of actin remodeling at sequential steps. Promotes particle ingestion by activating the WAS GTPase-binding protein that induces Arp2/3 dependent actin polymerization at the nascent phagocytic cup. Together with PIP5K1B, is required, after stimulation by G-protein coupled receptors, for the synthesis of IP3 that will induce stable platelet adhesion. Recruited to the plasma membrane by the E-cadherin/beta-catenin complex where it provides the substrate PtdIns(4,5)P2 for the production of PtdIns(3,4,5)P3, IP3 and DAG, that will mobilize internal calcium and drive keratinocyte differentiation. Positively regulates insulin-induced translocation of SLC2A4 to the cell membrane in adipocytes. Together with PIP5K1C has a role during embryogenesis. Independently of its catalytic activity, is required for membrane ruffling formation, actin organization and focal adhesion formation during directional cell migration by controlling integrin-induced translocation of the small GTPase RAC1 to the plasma membrane. Also functions in the nucleus where it acts as an activator of TUT1 adenylyltransferase activity in nuclear speckles, thereby regulating mRNA polyadenylation of a select set of mRNAs. This Mus musculus (Mouse) protein is Phosphatidylinositol 4-phosphate 5-kinase type-1 alpha.